The chain runs to 133 residues: MGQLKIKDKSQREGYKPNQAIAILRYAHISPLKARLVLREIHGKDVGEALYLLKVIPKRAARIAEKLLKSAIANAEQKGLDLDRLYIKKAVADRGPILKKWIPRAHGRATMVRKRLSHITIVLEEKPEGKEEE.

This sequence belongs to the universal ribosomal protein uL22 family. As to quaternary structure, part of the 50S ribosomal subunit.

In terms of biological role, this protein binds specifically to 23S rRNA; its binding is stimulated by other ribosomal proteins, e.g. L4, L17, and L20. It is important during the early stages of 50S assembly. It makes multiple contacts with different domains of the 23S rRNA in the assembled 50S subunit and ribosome. Its function is as follows. The globular domain of the protein is located near the polypeptide exit tunnel on the outside of the subunit, while an extended beta-hairpin is found that lines the wall of the exit tunnel in the center of the 70S ribosome. The sequence is that of Large ribosomal subunit protein uL22 from Aquifex pyrophilus.